The sequence spans 1512 residues: Probable RNA-directed RNA polymerase (1512 aa).

It belongs to the totiviridae RNA-directed RNA polymerase family.

It catalyses the reaction RNA(n) + a ribonucleoside 5'-triphosphate = RNA(n+1) + diphosphate. In terms of biological role, RNA-dependent RNA polymerase which replicates the viral genome. Catalyzes the transcription of fully conservative plus-strand genomic RNAs that are extruded from the virion into the cytoplasm where they function as mRNAs for translation of viral proteins and also as substrates for encapsidation to form new virions. Once encapsidated, the positive strand is converted to dsRNA by the RNA-directed RNA polymerase. The polypeptide is Probable RNA-directed RNA polymerase (gag-pol) (Saccharomyces cerevisiae virus L-BC (ScV-L-BC)).